Here is a 625-residue protein sequence, read N- to C-terminus: Cytochrome c oxidase subunit 1 (625 aa).

The helical transmembrane segment at 23–43 (IAIMYLIAGTLFFVKAGVMAL) threads the bilayer. His69 serves as a coordination point for Fe(II)-heme a. Helical transmembrane passes span 72–92 (IMLF…VIPL), 99–119 (VAFP…GLLL), 151–171 (FYVL…INFL), 195–215 (FISS…LALL), 240–260 (IFWI…FGII), and 272–292 (LFGY…GFMV). Cu cation-binding residues include His246 and Tyr250. A cross-link (1'-histidyl-3'-tyrosine (His-Tyr)) is located at residues 246–250 (HPEVY). Cu cation is bound by residues His295 and His296. The next 2 membrane-spanning stretches (helical) occupy residues 309 to 329 (IFAV…FNWL) and 343 to 363 (MLFA…GVML). His381 provides a ligand contact to heme a3. The next 5 membrane-spanning stretches (helical) occupy residues 382 to 402 (FHYI…FYWY), 417 to 437 (LFFW…HLLG), 460 to 480 (ISTI…INVI), 551 to 571 (SILP…LIML), and 577 to 597 (IINP…CMFV). His383 serves as a coordination point for Fe(II)-heme a.

It belongs to the heme-copper respiratory oxidase family.

The protein resides in the cell membrane. The catalysed reaction is 4 Fe(II)-[cytochrome c] + O2 + 8 H(+)(in) = 4 Fe(III)-[cytochrome c] + 2 H2O + 4 H(+)(out). The protein operates within energy metabolism; oxidative phosphorylation. In terms of biological role, cytochrome c oxidase is the component of the respiratory chain that catalyzes the reduction of oxygen to water. Subunits 1-3 form the functional core of the enzyme complex. CO I is the catalytic subunit of the enzyme. Electrons originating in cytochrome c are transferred via the copper A center of subunit 2 and heme A of subunit 1 to the bimetallic center formed by heme A3 and copper B. This Alkalihalophilus pseudofirmus (strain ATCC BAA-2126 / JCM 17055 / OF4) (Bacillus pseudofirmus) protein is Cytochrome c oxidase subunit 1 (ctaD).